We begin with the raw amino-acid sequence, 56 residues long: Small ribosomal subunit protein uS14 (56 aa).

Residues C21, C24, C39, and C42 each coordinate Zn(2+).

Belongs to the universal ribosomal protein uS14 family. The cofactor is Zn(2+).

This Guillardia theta (Cryptophyte) protein is Small ribosomal subunit protein uS14 (rps29A).